The sequence spans 172 residues: Large ribosomal subunit protein uL10 (172 aa).

This sequence belongs to the universal ribosomal protein uL10 family. Part of the ribosomal stalk of the 50S ribosomal subunit. The N-terminus interacts with L11 and the large rRNA to form the base of the stalk. The C-terminus forms an elongated spine to which L12 dimers bind in a sequential fashion forming a multimeric L10(L12)X complex.

In terms of biological role, forms part of the ribosomal stalk, playing a central role in the interaction of the ribosome with GTP-bound translation factors. This Rhizobium meliloti (strain 1021) (Ensifer meliloti) protein is Large ribosomal subunit protein uL10.